We begin with the raw amino-acid sequence, 239 residues long: Ditrans,polycis-undecaprenyl-diphosphate synthase ((2E,6E)-farnesyl-diphosphate specific) (239 aa).

Asp-18 is a catalytic residue. Mg(2+) is bound at residue Asp-18. Substrate is bound by residues Gly-19–Arg-22, Trp-23, Arg-31, His-35, and Ser-63–Glu-65. The active-site Proton acceptor is the Asn-66. Residues Trp-67, Arg-69, Arg-186, and Arg-192–Ser-194 contribute to the substrate site. Glu-205 contacts Mg(2+).

This sequence belongs to the UPP synthase family. As to quaternary structure, homodimer. Mg(2+) serves as cofactor.

The catalysed reaction is 8 isopentenyl diphosphate + (2E,6E)-farnesyl diphosphate = di-trans,octa-cis-undecaprenyl diphosphate + 8 diphosphate. Its function is as follows. Catalyzes the sequential condensation of isopentenyl diphosphate (IPP) with (2E,6E)-farnesyl diphosphate (E,E-FPP) to yield (2Z,6Z,10Z,14Z,18Z,22Z,26Z,30Z,34E,38E)-undecaprenyl diphosphate (di-trans,octa-cis-UPP). UPP is the precursor of glycosyl carrier lipid in the biosynthesis of bacterial cell wall polysaccharide components such as peptidoglycan and lipopolysaccharide. This chain is Ditrans,polycis-undecaprenyl-diphosphate synthase ((2E,6E)-farnesyl-diphosphate specific), found in Haemophilus influenzae (strain ATCC 51907 / DSM 11121 / KW20 / Rd).